The primary structure comprises 305 residues: Homoserine O-acetyltransferase (305 aa).

Cysteine 142 acts as the Acyl-thioester intermediate in catalysis. The substrate site is built by lysine 163 and serine 192. The active-site Proton acceptor is histidine 235. Residue glutamate 237 is part of the active site. Arginine 249 provides a ligand contact to substrate.

It belongs to the MetA family.

The protein localises to the cytoplasm. It carries out the reaction L-homoserine + acetyl-CoA = O-acetyl-L-homoserine + CoA. It functions in the pathway amino-acid biosynthesis; L-methionine biosynthesis via de novo pathway; O-acetyl-L-homoserine from L-homoserine: step 1/1. Its function is as follows. Transfers an acetyl group from acetyl-CoA to L-homoserine, forming acetyl-L-homoserine. The polypeptide is Homoserine O-acetyltransferase (Bacteroides thetaiotaomicron (strain ATCC 29148 / DSM 2079 / JCM 5827 / CCUG 10774 / NCTC 10582 / VPI-5482 / E50)).